We begin with the raw amino-acid sequence, 235 residues long: Phosphoribosylaminoimidazole-succinocarboxamide synthase (235 aa).

The protein belongs to the SAICAR synthetase family.

It carries out the reaction 5-amino-1-(5-phospho-D-ribosyl)imidazole-4-carboxylate + L-aspartate + ATP = (2S)-2-[5-amino-1-(5-phospho-beta-D-ribosyl)imidazole-4-carboxamido]succinate + ADP + phosphate + 2 H(+). It functions in the pathway purine metabolism; IMP biosynthesis via de novo pathway; 5-amino-1-(5-phospho-D-ribosyl)imidazole-4-carboxamide from 5-amino-1-(5-phospho-D-ribosyl)imidazole-4-carboxylate: step 1/2. The chain is Phosphoribosylaminoimidazole-succinocarboxamide synthase from Clostridium beijerinckii (strain ATCC 51743 / NCIMB 8052) (Clostridium acetobutylicum).